Here is a 919-residue protein sequence, read N- to C-terminus: TRPM8 channel-associated factor 2 (919 aa).

One can recognise a Peptidase M60 domain in the interval 542–841; sequence DCWVSTGLYL…TYLQLQEAFG (300 aa).

This sequence belongs to the TCAF family. Isoform 2 interacts with TRPM8 (via N-terminus and C-terminus domains); the interaction inhibits TRPM8 channel activity. Interacts with TRPV6. Isoform 2 is expressed in the prostate and in cancerous prostate samples.

Its subcellular location is the cell membrane. Negatively regulates the plasma membrane cation channel TRPM8 activity. Involved in the recruitment of TRPM8 to the cell surface. Promotes prostate cancer cell migration stimulation in a TRPM8-dependent manner. The polypeptide is TRPM8 channel-associated factor 2 (Homo sapiens (Human)).